The following is a 190-amino-acid chain: Putative manganese efflux pump MntP (190 aa).

The next 6 helical transmembrane spans lie at 3-23 (MSAT…ASIG), 41-61 (LIFG…GFFA), 62-82 (SQYI…ILGG), 105-127 (LALL…VGLA), 143-163 (ATMI…PILG), and 168-188 (VMGG…HLGY).

It belongs to the MntP (TC 9.B.29) family.

It is found in the cell inner membrane. Probably functions as a manganese efflux pump. The polypeptide is Putative manganese efflux pump MntP (Pectobacterium carotovorum subsp. carotovorum (strain PC1)).